Reading from the N-terminus, the 177-residue chain is Large ribosomal subunit protein uL6 (177 aa).

The protein belongs to the universal ribosomal protein uL6 family. As to quaternary structure, part of the 50S ribosomal subunit.

This protein binds to the 23S rRNA, and is important in its secondary structure. It is located near the subunit interface in the base of the L7/L12 stalk, and near the tRNA binding site of the peptidyltransferase center. This chain is Large ribosomal subunit protein uL6, found in Enterobacter sp. (strain 638).